The following is a 511-amino-acid chain: Maturase K (511 aa).

This sequence belongs to the intron maturase 2 family. MatK subfamily.

The protein resides in the plastid. Its subcellular location is the chloroplast. In terms of biological role, usually encoded in the trnK tRNA gene intron. Probably assists in splicing its own and other chloroplast group II introns. This is Maturase K from Hordeum jubatum (Foxtail barley).